The chain runs to 321 residues: MTKYALVGDVGGTNARLALCDIASGEISQAKTYSGLDYPSLEAVVRVYLDEHSVSVEDGCIAIACPITGDWVAMTNHTWAFSIAEMKKNLGFSHLEIINDFTAVSMAIPMLKKEHLIQFGGGEPVDGKPIAVYGAGTGLGVAHLVHVDKRWISLPGEGGHVDFAPNSEEEAMILEILRAEIGHVSAERVLSGPGLVNLYRAIVKSDNRLPENLRPKDITERALADSCIDCRRALSLFCVIMGRFGGDLALTMGTFGGVYIAGGIVPRFLEFFKASGFRGGFEDKGRFKDYIHGIPVYLIVHDNPGLLGSGAHLRQTLGHIL.

8 to 13 (GDVGGT) is a binding site for ATP.

The protein belongs to the bacterial glucokinase family.

The protein localises to the cytoplasm. The enzyme catalyses D-glucose + ATP = D-glucose 6-phosphate + ADP + H(+). The chain is Glucokinase from Salmonella paratyphi B (strain ATCC BAA-1250 / SPB7).